The chain runs to 467 residues: Translation initiation factor eIF2B subunit delta (467 aa).

Positions 1–106 (MGFSAEQAKK…QNPQNSPETD (106 aa)) are disordered. A phosphoserine mark is found at Ser16, Ser19, Ser21, and Ser23. A compositionally biased stretch (polar residues) spans 16–37 (SPVSESSSVGGTSPATASSVVS). At Thr27 the chain carries Phosphothreonine. Residues Ser28 and Ser37 each carry the phosphoserine modification. Basic residues predominate over residues 51–61 (LKKARKQASRR). The span at 84–102 (PNKNSNQQKKASKQNPQNS) shows a compositional bias: low complexity.

This sequence belongs to the eIF-2B alpha/beta/delta subunits family. In terms of assembly, component of the translation initiation factor 2B (eIF2B) complex which is a heterodecamer of two sets of five different subunits: alpha, beta, gamma, delta and epsilon. Subunits alpha, beta and delta comprise a regulatory subcomplex and subunits epsilon and gamma comprise a catalytic subcomplex. Within the complex, the hexameric regulatory complex resides at the center, with the two heterodimeric catalytic subcomplexes bound on opposite sides.

It is found in the cytoplasm. The protein resides in the cytosol. Its function is as follows. Acts as a component of the translation initiation factor 2B (eIF2B) complex, which catalyzes the exchange of GDP for GTP on the eukaryotic initiation factor 2 (eIF2) complex gamma subunit. Its guanine nucleotide exchange factor activity is repressed when bound to eIF2 complex phosphorylated on the alpha subunit, thereby limiting the amount of methionyl-initiator methionine tRNA available to the ribosome and consequently global translation is repressed. The protein is Translation initiation factor eIF2B subunit delta (tif224) of Schizosaccharomyces pombe (strain 972 / ATCC 24843) (Fission yeast).